The sequence spans 431 residues: Probable 3-hydroxy-3-methylglutaryl-coenzyme A reductase (431 aa).

Active-site charge relay system residues include Glu85 and Asp278. The active-site Proton donor is the His375.

This sequence belongs to the HMG-CoA reductase family.

The enzyme catalyses (R)-mevalonate + 2 NAD(+) + CoA = (3S)-3-hydroxy-3-methylglutaryl-CoA + 2 NADH + 2 H(+). The protein operates within metabolic intermediate metabolism; (R)-mevalonate degradation; (S)-3-hydroxy-3-methylglutaryl-CoA from (R)-mevalonate: step 1/1. Its function is as follows. Converts HMG-CoA to mevalonate. The chain is Probable 3-hydroxy-3-methylglutaryl-coenzyme A reductase from Borreliella burgdorferi (strain ATCC 35210 / DSM 4680 / CIP 102532 / B31) (Borrelia burgdorferi).